The primary structure comprises 187 residues: ATP synthase subunit delta (187 aa).

Belongs to the ATPase delta chain family. As to quaternary structure, F-type ATPases have 2 components, F(1) - the catalytic core - and F(0) - the membrane proton channel. F(1) has five subunits: alpha(3), beta(3), gamma(1), delta(1), epsilon(1). F(0) has three main subunits: a(1), b(2) and c(10-14). The alpha and beta chains form an alternating ring which encloses part of the gamma chain. F(1) is attached to F(0) by a central stalk formed by the gamma and epsilon chains, while a peripheral stalk is formed by the delta and b chains.

The protein resides in the cell membrane. Functionally, f(1)F(0) ATP synthase produces ATP from ADP in the presence of a proton or sodium gradient. F-type ATPases consist of two structural domains, F(1) containing the extramembraneous catalytic core and F(0) containing the membrane proton channel, linked together by a central stalk and a peripheral stalk. During catalysis, ATP synthesis in the catalytic domain of F(1) is coupled via a rotary mechanism of the central stalk subunits to proton translocation. This protein is part of the stalk that links CF(0) to CF(1). It either transmits conformational changes from CF(0) to CF(1) or is implicated in proton conduction. The sequence is that of ATP synthase subunit delta from Mesomycoplasma hyopneumoniae (strain 7448) (Mycoplasma hyopneumoniae).